Reading from the N-terminus, the 155-residue chain is Molybdopterin synthase catalytic subunit 2 (155 aa).

Substrate contacts are provided by residues 101–102 (HR), Lys117, and 124–126 (KKE).

This sequence belongs to the MoaE family. MOCS2B subfamily. Heterotetramer; composed of 2 small (MOCS2A) and 2 large (MOCS2B) subunits.

It localises to the cytoplasm. The enzyme catalyses 2 [molybdopterin-synthase sulfur-carrier protein]-C-terminal-Gly-aminoethanethioate + cyclic pyranopterin phosphate + H2O = molybdopterin + 2 [molybdopterin-synthase sulfur-carrier protein]-C-terminal Gly-Gly + 2 H(+). It participates in cofactor biosynthesis; molybdopterin biosynthesis. Catalytic subunit of the molybdopterin synthase complex, a complex that catalyzes the conversion of precursor Z into molybdopterin. Acts by mediating the incorporation of 2 sulfur atoms from thiocarboxylated MOCS2A into precursor Z to generate a dithiolene group. This Aedes aegypti (Yellowfever mosquito) protein is Molybdopterin synthase catalytic subunit 2.